A 295-amino-acid polypeptide reads, in one-letter code: Farnesyl diphosphate synthase (295 aa).

3 residues coordinate isopentenyl diphosphate: lysine 46, arginine 49, and histidine 78. Residues aspartate 85 and aspartate 91 each contribute to the Mg(2+) site. Arginine 96 is a binding site for (2E)-geranyl diphosphate. Residue arginine 97 participates in isopentenyl diphosphate binding. (2E)-geranyl diphosphate contacts are provided by lysine 180, threonine 181, glutamine 220, and lysine 237.

Belongs to the FPP/GGPP synthase family. It depends on Mg(2+) as a cofactor.

Its subcellular location is the cytoplasm. The catalysed reaction is isopentenyl diphosphate + (2E)-geranyl diphosphate = (2E,6E)-farnesyl diphosphate + diphosphate. This is Farnesyl diphosphate synthase (ispA) from Haemophilus influenzae (strain ATCC 51907 / DSM 11121 / KW20 / Rd).